The sequence spans 165 residues: Type 3 secretion system regulator YopR (165 aa).

It belongs to the YopR family.

The protein localises to the secreted. May be involved in the regulation of the assembly of the type III secretion system (T3SS), also called injectisome, which is used to inject bacterial effector proteins into eukaryotic host cells. May control the secretion and/or polymerization of YscF/SctF, the principal component of the needle filament, thereby impacting the assembly of the T3SS. Involved in pathogenesis. The polypeptide is Type 3 secretion system regulator YopR (Yersinia pseudotuberculosis serotype I (strain IP32953)).